The chain runs to 314 residues: DNA-directed RNA polymerase subunit alpha (314 aa).

The tract at residues 1 to 227 is alpha N-terminal domain (alpha-NTD); it reads MLEIEKPKIE…DYLKLFVALT (227 aa). The segment at 244–314 is alpha C-terminal domain (alpha-CTD); it reads QDKILEMTIE…LGLSLRKSED (71 aa).

Belongs to the RNA polymerase alpha chain family. In terms of assembly, homodimer. The RNAP catalytic core consists of 2 alpha, 1 beta, 1 beta' and 1 omega subunit. When a sigma factor is associated with the core the holoenzyme is formed, which can initiate transcription.

The catalysed reaction is RNA(n) + a ribonucleoside 5'-triphosphate = RNA(n+1) + diphosphate. Its function is as follows. DNA-dependent RNA polymerase catalyzes the transcription of DNA into RNA using the four ribonucleoside triphosphates as substrates. The polypeptide is DNA-directed RNA polymerase subunit alpha (Heliobacterium modesticaldum (strain ATCC 51547 / Ice1)).